We begin with the raw amino-acid sequence, 596 residues long: Invasin CotH7 (596 aa).

A signal peptide spans 1-17 (MKSLSFISLACLTAVHA). Asn-82, Asn-146, Asn-163, Asn-169, Asn-288, Asn-440, and Asn-544 each carry an N-linked (GlcNAc...) asparagine glycan. A compositionally biased stretch (low complexity) spans 528 to 544 (SATIAAPATSESASQDN). Residues 528 to 557 (SATIAAPATSESASQDNTSDDTDSASTSSS) form a disordered region. Residue Ser-567 is the site of GPI-anchor amidated serine attachment. Positions 568-596 (SASKSAPTFYCLQLVLYLSLSFKNLYKYI) are cleaved as a propeptide — removed in mature form.

As to quaternary structure, interacts with host integrin beta-1 ITGB1 on the cell surface of host alveolar epithelial cells.

Its subcellular location is the cell membrane. Promotes invasion of host epithelial cells by adhering to receptors on the host cell surface to facilitate endocytosis of the pathogen into host cells. Probably binds integrin ITGA3:ITGB1 via ITGB1, on the cell surface of host alveolar epithelial cells. The sequence is that of Invasin CotH7 from Rhizopus delemar (strain RA 99-880 / ATCC MYA-4621 / FGSC 9543 / NRRL 43880) (Mucormycosis agent).